The primary structure comprises 426 residues: L-cysteine:1D-myo-inositol 2-amino-2-deoxy-alpha-D-glucopyranoside ligase (426 aa).

Residue C43 coordinates Zn(2+). L-cysteinyl-5'-AMP is bound by residues 43–46 (CGIT), S58, and 81–83 (NVT). The short motif at 45 to 55 (ITPYDATHMGH) is the 'HIGH' region element. The 'ERGGDP' region motif lies at 200–205 (ERGGDP). An L-cysteinyl-5'-AMP-binding site is contributed by W241. C245 serves as a coordination point for Zn(2+). Residue 263-265 (GSD) coordinates L-cysteinyl-5'-AMP. H270 lines the Zn(2+) pocket. V296 contributes to the L-cysteinyl-5'-AMP binding site. Residues 302–306 (KMSKS) carry the 'KMSKS' region motif.

The protein belongs to the class-I aminoacyl-tRNA synthetase family. MshC subfamily. As to quaternary structure, monomer. Zn(2+) is required as a cofactor.

It carries out the reaction 1D-myo-inositol 2-amino-2-deoxy-alpha-D-glucopyranoside + L-cysteine + ATP = 1D-myo-inositol 2-(L-cysteinylamino)-2-deoxy-alpha-D-glucopyranoside + AMP + diphosphate + H(+). In terms of biological role, catalyzes the ATP-dependent condensation of GlcN-Ins and L-cysteine to form L-Cys-GlcN-Ins. The chain is L-cysteine:1D-myo-inositol 2-amino-2-deoxy-alpha-D-glucopyranoside ligase from Arthrobacter sp. (strain FB24).